The following is a 359-amino-acid chain: 3-dehydroquinate synthase (359 aa).

NAD(+) contacts are provided by residues aspartate 69–lysine 74, glycine 103–aspartate 107, threonine 127–threonine 128, lysine 140, lysine 149, and cysteine 167–threonine 170. 3 residues coordinate Zn(2+): glutamate 182, histidine 245, and histidine 262.

This sequence belongs to the sugar phosphate cyclases superfamily. Dehydroquinate synthase family. Requires Co(2+) as cofactor. The cofactor is Zn(2+). It depends on NAD(+) as a cofactor.

The protein localises to the cytoplasm. The enzyme catalyses 7-phospho-2-dehydro-3-deoxy-D-arabino-heptonate = 3-dehydroquinate + phosphate. It functions in the pathway metabolic intermediate biosynthesis; chorismate biosynthesis; chorismate from D-erythrose 4-phosphate and phosphoenolpyruvate: step 2/7. In terms of biological role, catalyzes the conversion of 3-deoxy-D-arabino-heptulosonate 7-phosphate (DAHP) to dehydroquinate (DHQ). The polypeptide is 3-dehydroquinate synthase (Aeromonas salmonicida (strain A449)).